Reading from the N-terminus, the 169-residue chain is Ribonuclease H (169 aa).

Positions 3-159 constitute an RNase H type-1 domain; that stretch reads AHAALTLYTD…CDRLATDAAR (157 aa). Mg(2+)-binding residues include aspartate 12, glutamate 63, aspartate 87, and aspartate 151.

The protein belongs to the RNase H family. In terms of assembly, monomer. The cofactor is Mg(2+).

The protein localises to the cytoplasm. It carries out the reaction Endonucleolytic cleavage to 5'-phosphomonoester.. Functionally, endonuclease that specifically degrades the RNA of RNA-DNA hybrids. This chain is Ribonuclease H, found in Treponema pallidum subsp. pallidum (strain SS14).